The chain runs to 1130 residues: Tyrosine-protein kinase ABL1 (1130 aa).

Residues 1-60 form a CAP region; sequence MLEICLKLVGCKSKKGLSSSSSCYLEEALQRPVASDFEPQGLSEAARWNSKENLLAGPSE. Leucine 2 carries N-myristoyl glycine lipidation. Serine 50 bears the Phosphoserine mark. Residues 61–121 form the SH3 domain; that stretch reads NDPNLFVALY…PSNYITPVNS (61 aa). Phosphotyrosine; by autocatalysis is present on tyrosine 70. 6 positions are modified to phosphotyrosine: tyrosine 115, tyrosine 128, tyrosine 139, tyrosine 172, tyrosine 185, and tyrosine 215. Positions 127 to 217 constitute an SH2 domain; it reads WYHGPVSRNA…GLITTLHYPA (91 aa). Tyrosine 226 carries the post-translational modification Phosphotyrosine; by autocatalysis. Residue serine 229 is modified to Phosphoserine. A Protein kinase domain is found at 242-493; it reads ITMKHKLGGG…PSFAEIHQAF (252 aa). 248–256 provides a ligand contact to ATP; sequence LGGGQYGEV. Tyrosine 253 and tyrosine 257 each carry phosphotyrosine. ATP-binding positions include lysine 271 and 316 to 322; that span reads EFMTYGN. The active-site Proton acceptor is the aspartate 363. Residues 381–405 carry the Kinase activation loop motif; the sequence is DFGLSRLMTGDTYTAHAGAKFPIKW. Tyrosine 393 carries the phosphotyrosine; by autocatalysis and SRC-type Tyr-kinases modification. Tyrosine 413 carries the post-translational modification Phosphotyrosine. Residues serine 446, serine 559, and serine 569 each carry the phosphoserine modification. The tract at residues 518–996 is disordered; it reads AVSTLLQAPE…SASSALAGDQ (479 aa). A compositionally biased stretch (basic and acidic residues) spans 537–566; the sequence is RAAEHRDTTDVPEMPHSKGQGESDPLDHEP. Basic and acidic residues predominate over residues 586–597; it reads EDERLLPKDKKT. Positions 605 to 609 match the Nuclear localization signal 1 motif; it reads KKKKK. Phosphoserine; by PAK2 is present on residues serine 618 and serine 619. Phosphoserine is present on residues serine 620, serine 659, and serine 683. Basic and acidic residues predominate over residues 620 to 640; it reads SFREMDGQPERRGAGEEEGRD. Polar residues predominate over residues 689-698; it reads KSSTLTSSRL. The short motif at 709–715 is the Nuclear localization signal 2 element; that stretch reads SSKRFLR. Residue lysine 711 is modified to N6-acetyllysine; by EP300. The residue at position 718 (serine 718) is a Phosphoserine. 2 positions are modified to phosphothreonine: threonine 735 and threonine 751. A compositionally biased stretch (polar residues) spans 740-752; sequence LQSTGRQFDSSTF. Basic and acidic residues predominate over residues 755 to 774; that stretch reads HKSEKPALPRKRAGENRSDQ. Positions 762-769 match the Nuclear localization signal 3 motif; the sequence is LPRKRAGE. Threonine 781 is subject to Phosphothreonine. Positions 788–802 are enriched in basic and acidic residues; sequence KKNEEAADEVFKDIM. A phosphothreonine mark is found at threonine 814, threonine 823, threonine 844, and threonine 852. Serine 855 bears the Phosphoserine mark. The tract at residues 869–968 is DNA-binding; sequence PAEESRVRRH…VLPATPKPQS (100 aa). Positions 881-891 are enriched in basic and acidic residues; that stretch reads SSESPGRDKGK. Positions 905–915 are enriched in low complexity; the sequence is ASAGKAGGKPS. Serine 917 carries the phosphoserine modification. The interval 953–1130 is F-actin-binding; that stretch reads EGLKKPVLPA…VKEISDIVQR (178 aa). Polar residues predominate over residues 965 to 975; it reads KPQSAKPSGTP. Serine 977 carries the post-translational modification Phosphoserine. The span at 984 to 993 shows a compositional bias: low complexity; sequence TLPSASSALA. The Nuclear export signal motif lies at 1090 to 1100; the sequence is LENNLRELQIC.

The protein belongs to the protein kinase superfamily. Tyr protein kinase family. ABL subfamily. In terms of assembly, interacts with SORBS1 following insulin stimulation. Found in a trimolecular complex containing CDK5 and CABLES1. Interacts with CABLES1 and PSTPIP1. Interacts with ZDHHC16, ITGB1 and HCK. Interacts with STX17; probably phosphorylates STX17. Interacts with INPPL1/SHIP2. Interacts with the 14-3-3 proteins, YWHAB, YWHAE, YWHAG, YWHAH, SFN and YWHAZ; the interaction with 14-3-3 proteins requires phosphorylation on Thr-735 and, sequesters ABL1 into the cytoplasm. Interacts with ABI1, ABI2, BCR, CRK, FGR, FYN, HCK, LYN, PSMA7 RAD9A, RAD51, RAD52, TP73 and WASF3. A complex made of ABL1, CTTN and MYLK regulates cortical actin-based cytoskeletal rearrangement critical to sphingosine 1-phosphate (S1P)-mediated endothelial cell (EC) barrier enhancement. Interacts (via SH3 domain) with CASP9; the interaction is direct and increases in the response of cells to genotoxic stress and ABL1/c-Abl activation. Found in a complex with ABL1, ABL2, CRK and UNC119; leading to the inhibition of CRK phosphorylation by ABL kinases. Interacts with TBX21. Interacts with NEDD9/HEF1; interaction is induced by CXCL12 promotion of ABL-mediated phosphorylation of NEDD9/HEF1. The cofactor is Mg(2+). Post-translationally, acetylated at Lys-711 by EP300 which promotes the cytoplasmic translocation. Phosphorylation at Tyr-70 by members of the SRC family of kinases disrupts SH3 domain-based autoinhibitory interactions and intermolecular associations, such as that with ABI1, and also enhances kinase activity. Phosphorylation at Tyr-226 and Tyr-393 correlate with increased activity. DNA damage-induced activation of ABL1 requires the function of ATM and Ser-446 phosphorylation. Phosphorylation at Ser-569 has been attributed to a CDC2-associated kinase and is coupled to cell division. Phosphorylation at Ser-618 and Ser-619 by PAK2 increases binding to CRK and reduces binding to ABI1. Phosphorylation on Thr-735 is required for binding 14-3-3 proteins for cytoplasmic translocation. Phosphorylated by PRKDC. In terms of processing, polyubiquitinated. Polyubiquitination of ABL1 leads to degradation. In terms of tissue distribution, widely expressed.

Its subcellular location is the cytoplasm. It is found in the cytoskeleton. The protein resides in the nucleus. It localises to the mitochondrion. The protein localises to the nucleus membrane. It catalyses the reaction L-tyrosyl-[protein] + ATP = O-phospho-L-tyrosyl-[protein] + ADP + H(+). Its activity is regulated as follows. Stabilized in the inactive form by an association between the SH3 domain and the SH2-TK linker region, interactions of the N-terminal cap, and contributions from an N-terminal myristoyl group and phospholipids. Activated by autophosphorylation as well as by SRC-family kinase-mediated phosphorylation. Activated by RIN1 binding to the SH2 and SH3 domains. Also stimulated by cell death inducers and DNA-damage. Phosphatidylinositol 4,5-bisphosphate (PIP2), a highly abundant phosphoinositide known to regulate cytoskeletal and membrane proteins, also inhibits the tyrosine kinase activity. Activated by 5-(1,3-diaryl-1H-pyrazol-4-yl)hydantoin, 5-[3-(4-fluorophenyl)-1-phenyl-1H-pyrazol-4-yl]-2,4-imidazolidinedione (DPH). Inhibited by ABI1, whose activity is controlled by ABL1 itself through tyrosine phosphorylation. Also inhibited by imatinib mesylate (Gleevec) which is used for the treatment of chronic myeloid leukemia (CML), and by VX-680, an inhibitor that also acts on imatinib-resistant mutants. Non-receptor tyrosine-protein kinase that plays a role in many key processes linked to cell growth and survival such as cytoskeleton remodeling in response to extracellular stimuli, cell motility and adhesion, receptor endocytosis, autophagy, DNA damage response and apoptosis. Coordinates actin remodeling through tyrosine phosphorylation of proteins controlling cytoskeleton dynamics like WASF3 (involved in branch formation); ANXA1 (involved in membrane anchoring); DBN1, DBNL, CTTN, RAPH1 and ENAH (involved in signaling); or MAPT and PXN (microtubule-binding proteins). Phosphorylation of WASF3 is critical for the stimulation of lamellipodia formation and cell migration. Involved in the regulation of cell adhesion and motility through phosphorylation of key regulators of these processes such as BCAR1, CRK, CRKL, DOK1, EFS or NEDD9. Phosphorylates multiple receptor tyrosine kinases and more particularly promotes endocytosis of EGFR, facilitates the formation of neuromuscular synapses through MUSK, inhibits PDGFRB-mediated chemotaxis and modulates the endocytosis of activated B-cell receptor complexes. Other substrates which are involved in endocytosis regulation are the caveolin (CAV1) and RIN1. Moreover, ABL1 regulates the CBL family of ubiquitin ligases that drive receptor down-regulation and actin remodeling. Phosphorylation of CBL leads to increased EGFR stability. Involved in late-stage autophagy by regulating positively the trafficking and function of lysosomal components. ABL1 targets to mitochondria in response to oxidative stress and thereby mediates mitochondrial dysfunction and cell death. In response to oxidative stress, phosphorylates serine/threonine kinase PRKD2 at 'Tyr-717'. ABL1 is also translocated in the nucleus where it has DNA-binding activity and is involved in DNA-damage response and apoptosis. Many substrates are known mediators of DNA repair: DDB1, DDB2, ERCC3, ERCC6, RAD9A, RAD51, RAD52 or WRN. Activates the proapoptotic pathway when the DNA damage is too severe to be repaired. Phosphorylates TP73, a primary regulator for this type of damage-induced apoptosis. Phosphorylates the caspase CASP9 on 'Tyr-153' and regulates its processing in the apoptotic response to DNA damage. Phosphorylates PSMA7 that leads to an inhibition of proteasomal activity and cell cycle transition blocks. ABL1 also acts as a regulator of multiple pathological signaling cascades during infection. Several known tyrosine-phosphorylated microbial proteins have been identified as ABL1 substrates. This is the case of A36R of Vaccinia virus, Tir (translocated intimin receptor) of pathogenic E.coli and possibly Citrobacter, CagA (cytotoxin-associated gene A) of H.pylori, or AnkA (ankyrin repeat-containing protein A) of A.phagocytophilum. Pathogens can highjack ABL1 kinase signaling to reorganize the host actin cytoskeleton for multiple purposes, like facilitating intracellular movement and host cell exit. Finally, functions as its own regulator through autocatalytic activity as well as through phosphorylation of its inhibitor, ABI1. Regulates T-cell differentiation in a TBX21-dependent manner. Positively regulates chemokine-mediated T-cell migration, polarization, and homing to lymph nodes and immune-challenged tissues, potentially via activation of NEDD9/HEF1 and RAP1. Phosphorylates TBX21 on tyrosine residues leading to an enhancement of its transcriptional activator activity. The sequence is that of Tyrosine-protein kinase ABL1 (ABL1) from Homo sapiens (Human).